Consider the following 318-residue polypeptide: NADH-ubiquinone oxidoreductase chain 1 (318 aa).

A run of 8 helical transmembrane segments spans residues 2-22 (FLIN…FLTL), 69-89 (LLFI…WLPI), 102-122 (ILFI…SGWA), 146-166 (LAII…SSLI), 171-191 (YMWI…STLA), 222-242 (LFFL…AILF), 253-273 (EMFT…FLWI), and 294-314 (LPLT…LSSI).

The protein belongs to the complex I subunit 1 family. In terms of assembly, core subunit of respiratory chain NADH dehydrogenase (Complex I) which is composed of 45 different subunits.

It is found in the mitochondrion inner membrane. The catalysed reaction is a ubiquinone + NADH + 5 H(+)(in) = a ubiquinol + NAD(+) + 4 H(+)(out). Functionally, core subunit of the mitochondrial membrane respiratory chain NADH dehydrogenase (Complex I) which catalyzes electron transfer from NADH through the respiratory chain, using ubiquinone as an electron acceptor. Essential for the catalytic activity and assembly of complex I. The sequence is that of NADH-ubiquinone oxidoreductase chain 1 (MT-ND1) from Oryctolagus cuniculus (Rabbit).